The sequence spans 167 residues: N-alpha-acetyltransferase (167 aa).

The N-acetyltransferase domain maps to 12-167 (YRIRNARLTD…EDAYLMAAPL (156 aa)). Y37 contributes to the substrate binding site. Zn(2+) is bound at residue H88. Acetyl-CoA contacts are provided by residues 92-94 (IAV) and 100-105 (RLGIGT). Position 127 (E127) interacts with Zn(2+). Acetyl-CoA-binding positions include N132 and 139–141 (YKK). Y154 contributes to the substrate binding site.

This sequence belongs to the acetyltransferase family. ARD1 subfamily. Homodimer.

The protein resides in the cytoplasm. It carries out the reaction N-terminal L-alanyl-[protein] + acetyl-CoA = N-terminal N(alpha)-acetyl-L-alanyl-[protein] + CoA + H(+). The catalysed reaction is N-terminal L-seryl-[protein] + acetyl-CoA = N-terminal N(alpha)-acetyl-L-seryl-[protein] + CoA + H(+). It catalyses the reaction N-terminal L-methionyl-L-leucyl-[protein] + acetyl-CoA = N-terminal N(alpha)-acetyl-L-methionyl-L-leucyl-[protein] + CoA + H(+). The enzyme catalyses N-terminal L-methionyl-L-glutamyl-[protein] + acetyl-CoA = N-terminal N(alpha)-acetyl-L-methionyl-L-glutamyl-[protein] + CoA + H(+). In terms of biological role, displays alpha (N-terminal) acetyltransferase activity. Catalyzes the covalent attachment of an acetyl moiety from acetyl-CoA to the free alpha-amino group at the N-terminus of a protein. In Sulfurisphaera tokodaii (strain DSM 16993 / JCM 10545 / NBRC 100140 / 7) (Sulfolobus tokodaii), this protein is N-alpha-acetyltransferase.